A 142-amino-acid chain; its full sequence is Hemoglobin subunit alpha (142 aa).

At Ser1 the chain carries N-acetylserine. The Globin domain occupies Ser1–Arg142. His58 contributes to the O2 binding site. His88 is a binding site for heme b.

It belongs to the globin family. In terms of assembly, heterotetramer of two alpha chains and two beta chains. In terms of tissue distribution, red blood cells.

Involved in oxygen transport from gills to the various peripheral tissues. The protein is Hemoglobin subunit alpha (hba) of Catostomus clarkii (Desert sucker).